Reading from the N-terminus, the 73-residue chain is DNA-directed RNA polymerase subunit epsilon (73 aa).

Belongs to the RNA polymerase subunit epsilon family. As to quaternary structure, RNAP is composed of a core of 2 alpha, a beta and a beta' subunit. The core is associated with a delta subunit, and at least one of epsilon or omega. When a sigma factor is associated with the core the holoenzyme is formed, which can initiate transcription.

It carries out the reaction RNA(n) + a ribonucleoside 5'-triphosphate = RNA(n+1) + diphosphate. Functionally, a non-essential component of RNA polymerase (RNAP). In Lactobacillus acidophilus (strain ATCC 700396 / NCK56 / N2 / NCFM), this protein is DNA-directed RNA polymerase subunit epsilon.